The chain runs to 174 residues: Shikimate kinase 2 (174 aa).

12–17 (GCGKTT) provides a ligand contact to ATP. Mg(2+) is bound by residues Thr-16 and Asp-32. Substrate is bound by residues Asp-34, Arg-58, and Gly-79. An LID domain region spans residues 112–126 (QAAPEEDLRPTLTGK). Arg-120 contributes to the ATP binding site. Arg-139 is a substrate binding site.

This sequence belongs to the shikimate kinase family. AroL subfamily. In terms of assembly, monomer. Mg(2+) serves as cofactor.

It localises to the cytoplasm. The enzyme catalyses shikimate + ATP = 3-phosphoshikimate + ADP + H(+). The protein operates within metabolic intermediate biosynthesis; chorismate biosynthesis; chorismate from D-erythrose 4-phosphate and phosphoenolpyruvate: step 5/7. Catalyzes the specific phosphorylation of the 3-hydroxyl group of shikimic acid using ATP as a cosubstrate. The chain is Shikimate kinase 2 from Shigella boydii serotype 18 (strain CDC 3083-94 / BS512).